Here is a 474-residue protein sequence, read N- to C-terminus: Aspartic-type endopeptidase ctsD (474 aa).

Positions 1–19 are cleaved as a signal peptide; the sequence is MHLLQCLLSTISLASTVTA. Positions 106 to 413 constitute a Peptidase A1 domain; it reads YFATVRVGSQ…DYDNHRIGFA (308 aa). Asp-124 is an active-site residue. Residues Asn-189, Asn-197, Asn-275, and Asn-301 are each glycosylated (N-linked (GlcNAc...) asparagine). Residue Asp-307 is part of the active site. Residues Asn-338, Asn-344, and Asn-414 are each glycosylated (N-linked (GlcNAc...) asparagine). Ser-452 carries GPI-anchor amidated serine lipidation. A propeptide spans 453–474 (removed in mature form); sequence ASIVSRFVHWPFIFALLCMVLV.

The protein belongs to the peptidase A1 family.

It localises to the cell membrane. In terms of biological role, secreted aspartic-type endopeptidase which is secreted and contributes to virulence. The sequence is that of Aspartic-type endopeptidase ctsD (ctsD) from Aspergillus fumigatus (strain ATCC MYA-4609 / CBS 101355 / FGSC A1100 / Af293) (Neosartorya fumigata).